The primary structure comprises 261 residues: MTHQSHAYHMVKPSPWPLTGALSALLMTSGLAMWFHFHSMTLLMLGLLTNTLTMYQWWRDVTRESTYQGHHTPPVQKGLRYGMILFITSEVFFFAGFFWAFYHSSLAPTPQLGGHWPPTGITPLNPLEVPLLNTSVLLASGVSITWAHHSLMENNRNQMIQALLITILLGLYFTLLQASEYFESPFTISDGIYGSTFFVATGFHGLHVIIGSTFLTICFIRQLMFHFTSKHHFGFEAAAWYWHFVDVVWLFLYVSIYWWGS.

Topologically, residues 1-15 (MTHQSHAYHMVKPSP) are mitochondrial matrix. The chain crosses the membrane as a helical span at residues 16–34 (WPLTGALSALLMTSGLAMW). Topologically, residues 35 to 40 (FHFHSM) are mitochondrial intermembrane. Residues 41 to 66 (TLLMLGLLTNTLTMYQWWRDVTREST) traverse the membrane as a helical segment. The Mitochondrial matrix portion of the chain corresponds to 67–72 (YQGHHT). A helical transmembrane segment spans residues 73–105 (PPVQKGLRYGMILFITSEVFFFAGFFWAFYHSS). Over 106–128 (LAPTPQLGGHWPPTGITPLNPLE) the chain is Mitochondrial intermembrane. A helical transmembrane segment spans residues 129 to 152 (VPLLNTSVLLASGVSITWAHHSLM). The Mitochondrial matrix segment spans residues 153–155 (ENN). A helical membrane pass occupies residues 156–183 (RNQMIQALLITILLGLYFTLLQASEYFE). Residues 184–190 (SPFTISD) are Mitochondrial intermembrane-facing. A helical membrane pass occupies residues 191 to 223 (GIYGSTFFVATGFHGLHVIIGSTFLTICFIRQL). The Mitochondrial matrix portion of the chain corresponds to 224–232 (MFHFTSKHH). A helical transmembrane segment spans residues 233-256 (FGFEAAAWYWHFVDVVWLFLYVSI). Over 257 to 261 (YWWGS) the chain is Mitochondrial intermembrane.

This sequence belongs to the cytochrome c oxidase subunit 3 family. In terms of assembly, component of the cytochrome c oxidase (complex IV, CIV), a multisubunit enzyme composed of 14 subunits. The complex is composed of a catalytic core of 3 subunits MT-CO1, MT-CO2 and MT-CO3, encoded in the mitochondrial DNA, and 11 supernumerary subunits COX4I1 (or COX4I2), COX5A, COX5B, COX6A1 (or COX6A2), COX6B1 (or COX6B2), COX6C, COX7A2 (or COX7A1), COX7B, COX7C, COX8A and NDUFA4, which are encoded in the nuclear genome. The complex exists as a monomer or a dimer and forms supercomplexes (SCs) in the inner mitochondrial membrane with NADH-ubiquinone oxidoreductase (complex I, CI) and ubiquinol-cytochrome c oxidoreductase (cytochrome b-c1 complex, complex III, CIII), resulting in different assemblies (supercomplex SCI(1)III(2)IV(1) and megacomplex MCI(2)III(2)IV(2)).

Its subcellular location is the mitochondrion inner membrane. The catalysed reaction is 4 Fe(II)-[cytochrome c] + O2 + 8 H(+)(in) = 4 Fe(III)-[cytochrome c] + 2 H2O + 4 H(+)(out). Functionally, component of the cytochrome c oxidase, the last enzyme in the mitochondrial electron transport chain which drives oxidative phosphorylation. The respiratory chain contains 3 multisubunit complexes succinate dehydrogenase (complex II, CII), ubiquinol-cytochrome c oxidoreductase (cytochrome b-c1 complex, complex III, CIII) and cytochrome c oxidase (complex IV, CIV), that cooperate to transfer electrons derived from NADH and succinate to molecular oxygen, creating an electrochemical gradient over the inner membrane that drives transmembrane transport and the ATP synthase. Cytochrome c oxidase is the component of the respiratory chain that catalyzes the reduction of oxygen to water. Electrons originating from reduced cytochrome c in the intermembrane space (IMS) are transferred via the dinuclear copper A center (CU(A)) of subunit 2 and heme A of subunit 1 to the active site in subunit 1, a binuclear center (BNC) formed by heme A3 and copper B (CU(B)). The BNC reduces molecular oxygen to 2 water molecules using 4 electrons from cytochrome c in the IMS and 4 protons from the mitochondrial matrix. The sequence is that of Cytochrome c oxidase subunit 3 (MT-CO3) from Homo sapiens (Human).